The sequence spans 105 residues: MKSFVVVALLVAVAAAVPLTPDGDAQILKYENDNIGVEGFQYGYETSNGIQHQESGQLNNVGTENEGIEVRGQFSYVGPDGVTYSVTYTAGQEGFKPVGAHIPVA.

The N-terminal stretch at 1-16 (MKSFVVVALLVAVAAA) is a signal peptide. A Chitin-binding type R&amp;R domain is found at 37–105 (VEGFQYGYET…KPVGAHIPVA (69 aa)).

In Hyalophora cecropia (Cecropia moth), this protein is Flexible cuticle protein 12 (CP12).